The following is a 467-amino-acid chain: Argininosuccinate lyase (467 aa).

This sequence belongs to the lyase 1 family. Argininosuccinate lyase subfamily.

It is found in the cytoplasm. The enzyme catalyses 2-(N(omega)-L-arginino)succinate = fumarate + L-arginine. It functions in the pathway amino-acid biosynthesis; L-arginine biosynthesis; L-arginine from L-ornithine and carbamoyl phosphate: step 3/3. In Nitrosococcus oceani (strain ATCC 19707 / BCRC 17464 / JCM 30415 / NCIMB 11848 / C-107), this protein is Argininosuccinate lyase.